A 344-amino-acid polypeptide reads, in one-letter code: HTH-type transcriptional regulator XC_2801 (344 aa).

The 58-residue stretch at 3-60 (HDLNDTLIFVKVVEQGSFIAAANSLGLPKTTVSRKVQELETRLGARLLHRTTRRIGLT) folds into the HTH lysR-type domain. Residues 20-39 (FIAAANSLGLPKTTVSRKVQ) constitute a DNA-binding region (H-T-H motif).

This sequence belongs to the LysR transcriptional regulatory family. As to quaternary structure, interacts with the cyclic di-GMP effector XC_3703.

Its activity is regulated as follows. Activity is regulated by cyclic di-GMP. Cyclic di-GMP specifically binds to XC_3703, which inhibits the interaction of the XC_2801-XC_3703 complex with DNA and prevents the transcription of the target genes. Transcriptional regulator that directly or indirectly regulates the expression of virulence-related genes, including flhB, aaeA, fliL and flgG. Binds to the promoter of the target genes only in the presence of XC_3703. The protein is HTH-type transcriptional regulator XC_2801 of Xanthomonas campestris pv. campestris (strain 8004).